A 156-amino-acid chain; its full sequence is Ribosome maturation factor RimP (156 aa).

This sequence belongs to the RimP family.

The protein localises to the cytoplasm. Its function is as follows. Required for maturation of 30S ribosomal subunits. The polypeptide is Ribosome maturation factor RimP (Bacillus subtilis (strain 168)).